The following is a 402-amino-acid chain: NADH-quinone oxidoreductase subunit D (402 aa).

The protein belongs to the complex I 49 kDa subunit family. As to quaternary structure, NDH-1 is composed of 14 different subunits. Subunits NuoB, C, D, E, F, and G constitute the peripheral sector of the complex.

Its subcellular location is the cell inner membrane. It catalyses the reaction a quinone + NADH + 5 H(+)(in) = a quinol + NAD(+) + 4 H(+)(out). Its function is as follows. NDH-1 shuttles electrons from NADH, via FMN and iron-sulfur (Fe-S) centers, to quinones in the respiratory chain. The immediate electron acceptor for the enzyme in this species is believed to be ubiquinone. Couples the redox reaction to proton translocation (for every two electrons transferred, four hydrogen ions are translocated across the cytoplasmic membrane), and thus conserves the redox energy in a proton gradient. The sequence is that of NADH-quinone oxidoreductase subunit D from Azorhizobium caulinodans (strain ATCC 43989 / DSM 5975 / JCM 20966 / LMG 6465 / NBRC 14845 / NCIMB 13405 / ORS 571).